Reading from the N-terminus, the 360-residue chain is Putative agmatine deiminase (360 aa).

Cysteine 353 serves as the catalytic Amidino-cysteine intermediate.

Belongs to the agmatine deiminase family.

The enzyme catalyses agmatine + H2O = N-carbamoylputrescine + NH4(+). The protein is Putative agmatine deiminase of Vibrio parahaemolyticus serotype O3:K6 (strain RIMD 2210633).